The following is a 296-amino-acid chain: Copper resistance protein B (296 aa).

Positions 1–23 are cleaved as a signal peptide; sequence MKRNLKAIPVLVAGLFTSQLSIA.

The protein resides in the cell outer membrane. Required for the copper-inducible expression of copper resistance. The chain is Copper resistance protein B (pcoB) from Escherichia coli.